The sequence spans 335 residues: Fructose-1,6-bisphosphatase class 1 (335 aa).

Glutamate 90, aspartate 112, leucine 114, and aspartate 115 together coordinate Mg(2+). Residues 115–118, asparagine 210, and lysine 276 contribute to the substrate site; that span reads DGSS. Glutamate 282 provides a ligand contact to Mg(2+).

It belongs to the FBPase class 1 family. In terms of assembly, homotetramer. It depends on Mg(2+) as a cofactor.

It localises to the cytoplasm. The catalysed reaction is beta-D-fructose 1,6-bisphosphate + H2O = beta-D-fructose 6-phosphate + phosphate. Its pathway is carbohydrate biosynthesis; gluconeogenesis. This chain is Fructose-1,6-bisphosphatase class 1, found in Ectopseudomonas mendocina (strain ymp) (Pseudomonas mendocina).